The following is a 140-amino-acid chain: Large ribosomal subunit protein uL13 (140 aa).

The protein belongs to the universal ribosomal protein uL13 family. In terms of assembly, part of the 50S ribosomal subunit.

Functionally, this protein is one of the early assembly proteins of the 50S ribosomal subunit, although it is not seen to bind rRNA by itself. It is important during the early stages of 50S assembly. The chain is Large ribosomal subunit protein uL13 from Methanosarcina barkeri (strain Fusaro / DSM 804).